The primary structure comprises 74 residues: MFTLKKSLLLVFFLGTISLSLCEDERNADEDDGEMTEEVRRGLMDSLKGLAATAGKTVLQGLLKTASCKLEKTC.

Positions 1–22 are cleaved as a signal peptide; the sequence is MFTLKKSLLLVFFLGTISLSLC. A propeptide spanning residues 23-39 is cleaved from the precursor; the sequence is EDERNADEDDGEMTEEV. Cysteines 68 and 74 form a disulfide.

In terms of tissue distribution, expressed by the skin glands.

It localises to the secreted. Antimicrobial peptide. This chain is Pelophylaxin-3, found in Pelophylax fukienensis (Fukien gold-striped pond frog).